The primary structure comprises 345 residues: Phosphoribosylformylglycinamidine cyclo-ligase (345 aa).

It belongs to the AIR synthase family.

Its subcellular location is the cytoplasm. It catalyses the reaction 2-formamido-N(1)-(5-O-phospho-beta-D-ribosyl)acetamidine + ATP = 5-amino-1-(5-phospho-beta-D-ribosyl)imidazole + ADP + phosphate + H(+). The protein operates within purine metabolism; IMP biosynthesis via de novo pathway; 5-amino-1-(5-phospho-D-ribosyl)imidazole from N(2)-formyl-N(1)-(5-phospho-D-ribosyl)glycinamide: step 2/2. This chain is Phosphoribosylformylglycinamidine cyclo-ligase, found in Histophilus somni (strain 2336) (Haemophilus somnus).